The primary structure comprises 96 residues: Acylphosphatase (96 aa).

Residues 9-96 (CAEIYVSGRV…DTFTDFFIKR (88 aa)) form the Acylphosphatase-like domain. Residues Arg24 and Asn42 contribute to the active site.

This sequence belongs to the acylphosphatase family.

The enzyme catalyses an acyl phosphate + H2O = a carboxylate + phosphate + H(+). The protein is Acylphosphatase (acyP) of Methanococcoides burtonii (strain DSM 6242 / NBRC 107633 / OCM 468 / ACE-M).